We begin with the raw amino-acid sequence, 862 residues long: uncharacterized protein (862 aa).

Disordered regions lie at residues 45 to 91, 633 to 824, and 837 to 862; these read HPPV…PDEV, RAEQ…GDDD, and GGSG…LLLS. 2 stretches are compositionally biased toward acidic residues: residues 57-69 and 78-91; these read MDVD…EKDE and PEVE…PDEV. Basic and acidic residues-rich tracts occupy residues 633 to 650, 657 to 686, and 694 to 703; these read RAEQ…DAAK, REAE…KAEK, and TKKEKTEKKT. A compositionally biased stretch (basic residues) spans 751–760; sequence EKKKRTAAKK. Residues 761–779 are compositionally biased toward basic and acidic residues; the sequence is KTVDRPSGHRPSSKKEYRS.

This is an uncharacterized protein from Ictaluridae (bullhead catfishes).